A 486-amino-acid chain; its full sequence is Ribosomal protein uS12 methylthiotransferase RimO (486 aa).

An MTTase N-terminal domain is found at 9-125; sequence RSVALVTLGC…LSSHLEAILH (117 aa). The [4Fe-4S] cluster site is built by Cys-18, Cys-54, Cys-88, Cys-191, Cys-195, and Cys-198. Residues 177–408 form the Radical SAM core domain; the sequence is LGSGPWAPVK…RLVEELVTQR (232 aa). In terms of domain architecture, TRAM spans 410-482; it reads EERLGEVVEV…GADLLAEPLV (73 aa).

It belongs to the methylthiotransferase family. RimO subfamily. [4Fe-4S] cluster is required as a cofactor.

It is found in the cytoplasm. It catalyses the reaction L-aspartate(89)-[ribosomal protein uS12]-hydrogen + (sulfur carrier)-SH + AH2 + 2 S-adenosyl-L-methionine = 3-methylsulfanyl-L-aspartate(89)-[ribosomal protein uS12]-hydrogen + (sulfur carrier)-H + 5'-deoxyadenosine + L-methionine + A + S-adenosyl-L-homocysteine + 2 H(+). Functionally, catalyzes the methylthiolation of an aspartic acid residue of ribosomal protein uS12. This Kineococcus radiotolerans (strain ATCC BAA-149 / DSM 14245 / SRS30216) protein is Ribosomal protein uS12 methylthiotransferase RimO.